The sequence spans 177 residues: Large ribosomal subunit protein uL6 (177 aa).

Belongs to the universal ribosomal protein uL6 family. Part of the 50S ribosomal subunit.

Its function is as follows. This protein binds to the 23S rRNA, and is important in its secondary structure. It is located near the subunit interface in the base of the L7/L12 stalk, and near the tRNA binding site of the peptidyltransferase center. The polypeptide is Large ribosomal subunit protein uL6 (Dinoroseobacter shibae (strain DSM 16493 / NCIMB 14021 / DFL 12)).